The primary structure comprises 510 residues: F-box only protein 15 (510 aa).

Residues 77–117 (MPSEILLKIFSYLDAVSLLCTGCVSRRFYHLANDNFIWIGI) form the F-box domain.

Directly interacts with SKP1 and CUL1.

Substrate-recognition component of the SCF (SKP1-CUL1-F-box protein)-type E3 ubiquitin ligase complex. The sequence is that of F-box only protein 15 (FBXO15) from Homo sapiens (Human).